Reading from the N-terminus, the 613-residue chain is MAEGVFQGAIGIDLGTTYSCVATYESSVEIIANEQGNRVTPSFVAFTPQERLIGDAAKNQAALNPRNTVFDAKRLIGRRFDDESVQKDMKTWPFKVIDVDGNPVIEVQYLEETKTFSPQEISAMVLTKMKEIAEAKIGKKVEKAVITVPAYFNDAQRQATKDAGAISGLNVLRIINEPTAAAIAYGLGAGKSEKERHVLIFDLGGGTFDVSLLHIAGGVYTVKSTSGNTHLGGQDFDTNLLEHFKAEFKKKTGLDISDDARALRRLRTAAERAKRTLSSVTQTTVEVDSLFDGEDFESSLTRARFEDLNAALFKSTLEPVEQVLKDAKISKSQIDEVVLVGGSTRIPKVQKLLSDFFDGKQLEKSINPDEAVAYGAAVQGAILTGQSTSDETKDLLLLDVAPLSLGVGMQGDIFGIVVPRNTTVPTIKRRTFTTVSDNQTTVQFPVYQGERVNCKENTLLGEFDLKNIPMMPAGEPVLEAIFEVDANGILKVTAVEKSTGKSSNITISNAVGRLSSEEIEKMVNQAEEFKAADEAFAKKHEARQRLESYVASIEQTVTDPVLSSKLKRGSKSKIEAALSDALAALQIEDPSADELRKAEVGLKRVVTKAMSSR.

N-acetylalanine is present on Ala2. Positions 2–391 are nucleotide binding domain (NBD); sequence AEGVFQGAIG…ILTGQSTSDE (390 aa). ATP is bound at residue 16-18; the sequence is TTY. Phosphothreonine is present on Thr47. Residues Lys73, 205-207, 271-278, and Gly342 each bind ATP; these read GGT and ERAKRTLS. Residues 392–402 are inter-domain linker; that stretch reads TKDLLLLDVAP. Positions 403–613 are substrate binding domain (SBD); the sequence is LSLGVGMQGD…RVVTKAMSSR (211 aa). The Contributes to ribosome binding motif lies at 428–430; it reads KRR. A Phosphothreonine modification is found at Thr431. A lid domain (SBDalpha) region spans residues 516-612; sequence SEEIEKMVNQ…KRVVTKAMSS (97 aa). Positions 574-582 match the Nuclear export signal motif; sequence IEAALSDAL. The required for interaction with ribosomes stretch occupies residues 601–613; the sequence is GLKRVVTKAMSSR.

Belongs to the heat shock protein 70 family. Ssb-type Hsp70 subfamily. In terms of assembly, binds to ribosomes. Binds close to the ribosomal tunnel exit via contacts with both ribosomal proteins RPL35, RPL39 and RPL19, and rRNA. Directly interacts with nascent polypeptides. This interaction is dependent on the ribosome-associated complex (RAC). Interacts with SSE1.

Its subcellular location is the cytoplasm. The enzyme catalyses ATP + H2O = ADP + phosphate + H(+). Its function is as follows. Ribosome-bound, Hsp70-type chaperone that assists in the cotranslational folding of newly synthesized proteins in the cytosol. Stimulates folding by interacting with nascent chains, binding to short, largely hydrophobic sequences exposed by unfolded proteins, thereby stabilizing longer, more slowly translated, and aggregation-prone nascent polypeptides and domains that cannot fold stably until fully synthesized. The Hsp70-protein substrate interaction depends on ATP-binding and on allosteric regulation between the NBD and the SBD. The ATP-bound state is characterized by a fast exchange rate of substrate (low affinity state), while in the ADP-bound state exchange is much slower (high affinity state). During the Hsp70 cycle, the chaperone switches between the ATP-bound state (open conformation) and the ADP-bound state (closed conformation) by major conformational rearrangements involving mainly the lid domain. Ssb cooperates with a specific Hsp40/Hsp70 co-chaperone termed the ribosome-associated complex (RAC), which stimulates the ATPase activity of the ribosome-associated pool of Ssbs and switches it to the high affinity substrate binding state. Hsp110 chaperone SSE1 and FES1 act as nucleotide exchange factors that cause substrate release. This Saccharomyces cerevisiae (strain ATCC 204508 / S288c) (Baker's yeast) protein is Ribosome-associated molecular chaperone SSB2.